Consider the following 142-residue polypeptide: Potassium voltage-gated channel subfamily E regulatory beta subunit 5 (142 aa).

Residues asparagine 2 and asparagine 25 are each glycosylated (N-linked (GlcNAc...) asparagine). A helical membrane pass occupies residues 61–81; the sequence is LYILLIMIFYACLAGGLILAY. The Cytoplasmic segment spans residues 82–142; it reads TRSRKLVEAK…PALAQGAERV (61 aa). Residues 119–142 are disordered; sequence SQAEGRRQLASEGLPALAQGAERV.

The protein belongs to the potassium channel KCNE family. As to quaternary structure, interacts with KCNQ1; impairs KCNQ1 localization in lipid rafts and only conducts current upon strong and continued depolarization. As to expression, highly expressed in heart, skeletal muscle, brain, spinal cord and placenta.

It is found in the membrane. Functionally, potassium channel ancillary subunit that is essential for generation of some native K(+) currents by virtue of formation of heteromeric ion channel complex with voltage-gated potassium (Kv) channel pore-forming alpha subunits. Functions as an inhibitory beta-subunit of the repolarizing cardiac potassium ion channel KCNQ1. The sequence is that of Potassium voltage-gated channel subfamily E regulatory beta subunit 5 (KCNE5) from Homo sapiens (Human).